The chain runs to 418 residues: MENKLLCWWLYWPCVYSSIIATIISFYTITRHLLNYRKPYEQRLSIRILLLVPIFSVSCASGIIKPEAAQFYVDPIREFYEAFVIYTFFTFLTLLLGGERNIITVLSLNHAPTRHPIPLIGKICKPIDLSDPFDFLFVKKGILQYVWFKPFYCFGTLICSAWKLPKFEIFLNVFYNISVTWSLYSLALFWKCLYPELTPYKPWLKFLCVKLIIFASYWQSIIIQGLVVTGKLGTGNQDRTSGYVYKNGLLCIEMVPFAILHAVAFPWNKYTAFSIPYGARMKFIYALKDFLGCGDLIWDFKQTLFAGPLYYNYRNFDPEAMDLLSTRQQSGATMERLKHGLRFTDNGRNSYWVAYGSIDNNLVPESIEESWEDDIAGQRTFPEDPNYPVVHDYTMGHRYSRSMNDLRRDVQSRSSMAC.

At 1 to 5 (MENKL) the chain is on the extracellular side. A helical transmembrane segment spans residues 6–26 (LCWWLYWPCVYSSIIATIISF). At 27 to 43 (YTITRHLLNYRKPYEQR) the chain is on the cytoplasmic side. The helical transmembrane segment at 44–64 (LSIRILLLVPIFSVSCASGII) threads the bilayer. Residues 65–78 (KPEAAQFYVDPIRE) are Extracellular-facing. The chain crosses the membrane as a helical span at residues 79-99 (FYEAFVIYTFFTFLTLLLGGE). Residues 100-141 (RNIITVLSLNHAPTRHPIPLIGKICKPIDLSDPFDFLFVKKG) lie on the Cytoplasmic side of the membrane. A helical transmembrane segment spans residues 142–162 (ILQYVWFKPFYCFGTLICSAW). Residues 163–168 (KLPKFE) lie on the Extracellular side of the membrane. The chain crosses the membrane as a helical span at residues 169–189 (IFLNVFYNISVTWSLYSLALF). Residues 190–205 (WKCLYPELTPYKPWLK) are Cytoplasmic-facing. The chain crosses the membrane as a helical span at residues 206–226 (FLCVKLIIFASYWQSIIIQGL). Residues 227–246 (VVTGKLGTGNQDRTSGYVYK) lie on the Extracellular side of the membrane. The chain crosses the membrane as a helical span at residues 247–267 (NGLLCIEMVPFAILHAVAFPW). Residues 268-418 (NKYTAFSIPY…DVQSRSSMAC (151 aa)) are Cytoplasmic-facing. Positions 379-402 (RTFPEDPNYPVVHDYTMGHRYSRS) are ATG8-interacting region.

It belongs to the TMEM184 family. In terms of assembly, interacts with ATG8.

Its subcellular location is the vacuole membrane. Vacuole membrane protein that recruits ATG8 to facilitate the degradation of vacuolar integral membrane proteins during early-stationary vacuole turnover (EVT) when cells enter stationary phase. In Saccharomyces cerevisiae (strain ATCC 204508 / S288c) (Baker's yeast), this protein is Vacuole membrane protein HFL1.